The sequence spans 258 residues: Snake venom serine proteinase 8 (258 aa).

An N-terminal signal peptide occupies residues 1–18 (MVLIRVLANLLILQLSYA). Positions 19–24 (QKSSEL) are excised as a propeptide. The 225-residue stretch at 25 to 249 (VIGGDECNIN…YNDWIQSIIA (225 aa)) folds into the Peptidase S1 domain. Cystine bridges form between Cys31/Cys163, Cys50/Cys66, Cys98/Cys256, Cys142/Cys210, Cys174/Cys189, and Cys200/Cys225. Asn44 carries an N-linked (GlcNAc...) asparagine glycan. Residues His65 and Asp110 each act as charge relay system in the active site. Ser204 acts as the Charge relay system in catalysis.

The protein belongs to the peptidase S1 family. Snake venom subfamily. As to quaternary structure, monomer. As to expression, expressed by the venom gland.

Its subcellular location is the secreted. Functionally, snake venom serine protease that may act in the hemostasis system of the prey. This Crotalus adamanteus (Eastern diamondback rattlesnake) protein is Snake venom serine proteinase 8.